Reading from the N-terminus, the 318-residue chain is Porphobilinogen deaminase (318 aa).

Residue Cys241 is modified to S-(dipyrrolylmethanemethyl)cysteine.

This sequence belongs to the HMBS family. As to quaternary structure, monomer. It depends on dipyrromethane as a cofactor.

The enzyme catalyses 4 porphobilinogen + H2O = hydroxymethylbilane + 4 NH4(+). Its pathway is porphyrin-containing compound metabolism; protoporphyrin-IX biosynthesis; coproporphyrinogen-III from 5-aminolevulinate: step 2/4. Tetrapolymerization of the monopyrrole PBG into the hydroxymethylbilane pre-uroporphyrinogen in several discrete steps. This Geotalea daltonii (strain DSM 22248 / JCM 15807 / FRC-32) (Geobacter daltonii) protein is Porphobilinogen deaminase.